Reading from the N-terminus, the 433-residue chain is tRNA-2-methylthio-N(6)-dimethylallyladenosine synthase (433 aa).

Positions 3-118 (KKLFIQTLGC…ISTAVKTPKF (116 aa)) constitute an MTTase N-terminal domain. The [4Fe-4S] cluster site is built by C12, C49, C81, C150, C154, and C157. Residues 136–369 (RGSPYKSHIN…QSRHNEILDE (234 aa)) enclose the Radical SAM core domain. Positions 372 to 433 (AAQEGKILDV…RMVLYGELAN (62 aa)) constitute a TRAM domain.

The protein belongs to the methylthiotransferase family. MiaB subfamily. In terms of assembly, monomer. It depends on [4Fe-4S] cluster as a cofactor.

It is found in the cytoplasm. It carries out the reaction N(6)-dimethylallyladenosine(37) in tRNA + (sulfur carrier)-SH + AH2 + 2 S-adenosyl-L-methionine = 2-methylsulfanyl-N(6)-dimethylallyladenosine(37) in tRNA + (sulfur carrier)-H + 5'-deoxyadenosine + L-methionine + A + S-adenosyl-L-homocysteine + 2 H(+). Catalyzes the methylthiolation of N6-(dimethylallyl)adenosine (i(6)A), leading to the formation of 2-methylthio-N6-(dimethylallyl)adenosine (ms(2)i(6)A) at position 37 in tRNAs that read codons beginning with uridine. The polypeptide is tRNA-2-methylthio-N(6)-dimethylallyladenosine synthase (Campylobacter curvus (strain 525.92)).